We begin with the raw amino-acid sequence, 492 residues long: Solute carrier family 2, facilitated glucose transporter member 1 (492 aa).

An N-acetylmethionine modification is found at M1. The Cytoplasmic segment spans residues 1 to 11 (MEPSSKKVTGR). The helical transmembrane segment at 12 to 33 (LMLAVGGAVLGSLQFGYNTGVI) threads the bilayer. Topologically, residues 34–66 (NAPQKVIEEFYNQTWNHRYGESIPSTTLTTLWS) are extracellular. N-linked (GlcNAc...) asparagine glycosylation occurs at N45. A helical membrane pass occupies residues 67-87 (LSVAIFSVGGMIGSFSVGLFV). The Cytoplasmic portion of the chain corresponds to 88 to 90 (NRF). Residues 91–112 (GRRNSMLMMNLLAFVSAVLMGF) form a helical membrane-spanning segment. The Extracellular portion of the chain corresponds to 113-120 (SKLGKSFE). Residues 121-144 (MLILGRFIIGVYCGLTTGFVPMYV) form a helical membrane-spanning segment. Residues 145–155 (GEVSPTALRGA) lie on the Cytoplasmic side of the membrane. A helical transmembrane segment spans residues 156-176 (LGTLHQLGIVVGILIAQVFGL). Position 161 (Q161) interacts with D-glucose. At 177–185 (DSIMGNADL) the chain is on the extracellular side. Residues 186–206 (WPLLLSVIFIPALLQCILLPF) form a helical membrane-spanning segment. Topologically, residues 207–271 (CPESPRFLLI…LFRSPAYRQP (65 aa)) are cytoplasmic. Phosphoserine is present on S226. The helical transmembrane segment at 272-293 (ILIAVVLQLSQQLSGINAVFYY) threads the bilayer. D-glucose is bound by residues 282–283 (QQ) and N288. Residues 294–306 (STSIFEKAGVQQP) are Extracellular-facing. The chain crosses the membrane as a helical span at residues 307-328 (VYATIGSGIVNTAFTVVSLFVV). Residue N317 coordinates D-glucose. At 329 to 334 (ERAGRR) the chain is on the cytoplasmic side. A helical transmembrane segment spans residues 335–355 (TLHLIGLAGMAGCAVLMTIAL). The Extracellular portion of the chain corresponds to 356-365 (ALLEQLPWMS). A helical membrane pass occupies residues 366-388 (YLSIVAIFGFVAFFEVGPGPIPW). E380 and W388 together coordinate D-glucose. At 389–401 (FIVAELFSQGPRP) the chain is on the cytoplasmic side. Residues 402–422 (AAVAVAGFSNWTSNFIVGMCF) traverse the membrane as a helical segment. At 423-429 (QYVEQLC) the chain is on the extracellular side. The helical transmembrane segment at 430–450 (GPYVFIIFTVLLVLFFIFTYF) threads the bilayer. The Cytoplasmic segment spans residues 451–492 (KVPETKGRTFDEIASGFRQGGASQSDKTPEELFHPLGADSQV). S465 bears the Phosphoserine mark. The tract at residues 468–492 (RQGGASQSDKTPEELFHPLGADSQV) is disordered. Phosphothreonine is present on T478. S490 carries the post-translational modification Phosphoserine.

This sequence belongs to the major facilitator superfamily. Sugar transporter (TC 2.A.1.1) family. Glucose transporter subfamily. As to quaternary structure, found in a complex with ADD2, DMTN and SLC2A1. Interacts (via C-terminus cytoplasmic region) with DMTN. Interacts with SNX27; the interaction is required when endocytosed to prevent degradation in lysosomes and promote recycling to the plasma membrane. Interacts with STOM. Interacts with GIPC (via PDZ domain). Interacts with SGTA (via Gln-rich region). Interacts with isoform 1 of BSG. Interacts with SMIM43; the interaction may promote SLC2A1-mediated glucose transport to meet the energy needs of mesendoderm differentiation. Phosphorylation at Ser-226 by PKC promotes glucose uptake by increasing cell membrane localization. As to expression, detected in osteoblastic cells (at protein level). Detected in brain, and at lower levels in kidney, heart and lung.

Its subcellular location is the cell membrane. It localises to the photoreceptor inner segment. It catalyses the reaction D-glucose(out) = D-glucose(in). With respect to regulation, the uptake of glucose is inhibited by cytochalasin B. Glucose uptake is increased in response to phorbol ester 12-O-tetradecanoylphorbol-13-acetate (TPA) treatment: TPA-induced glucose uptake requires phosphorylation at Ser-226. Its function is as follows. Facilitative glucose transporter, which is responsible for constitutive or basal glucose uptake. Has a very broad substrate specificity; can transport a wide range of aldoses including both pentoses and hexoses. Most important energy carrier of the brain: present at the blood-brain barrier and assures the energy-independent, facilitative transport of glucose into the brain. In association with BSG and NXNL1, promotes retinal cone survival by increasing glucose uptake into photoreceptors. Required for mesendoderm differentiation. In Rattus norvegicus (Rat), this protein is Solute carrier family 2, facilitated glucose transporter member 1.